Here is a 489-residue protein sequence, read N- to C-terminus: NADH-quinone oxidoreductase subunit N (489 aa).

A run of 14 helical transmembrane segments spans residues 6–26 (VLFIAELPLLLTALTAIAVML), 37–57 (VFYITVIGLNAALFSLLPASS), 66–86 (LLIVDSYSVFYSALILIGSLA), 105–125 (FYLLLSLASTGAMVMAQAHHL), 127–147 (AIFIGVELMSLPLFGLVGYAF), 159–179 (YMVLSASATAFLLFGIALIYA), 204–224 (ITLLIVGLGMVVIGFGFKLSL), 239–259 (PAPVTTYLATVSKIAVFAVLL), 271–291 (FFYSLLGGLAFISIIIGNLLA), 299–319 (RLLGFSSTAHFGYLLVALIAC), 329–349 (VALYLVMYLLTSVGSFGVVSL), 377–397 (SAMTIMFLSLAGIPMTLGFIG), 408–430 (FHLWWLTGAVVFGSAVGLYYYLR), and 452–472 (ALTTGGFMVLTSAILVVLLGI).

It belongs to the complex I subunit 2 family. NDH-1 is composed of 14 different subunits. Subunits NuoA, H, J, K, L, M, N constitute the membrane sector of the complex.

The protein resides in the cell inner membrane. The enzyme catalyses a quinone + NADH + 5 H(+)(in) = a quinol + NAD(+) + 4 H(+)(out). In terms of biological role, NDH-1 shuttles electrons from NADH, via FMN and iron-sulfur (Fe-S) centers, to quinones in the respiratory chain. The immediate electron acceptor for the enzyme in this species is believed to be ubiquinone. Couples the redox reaction to proton translocation (for every two electrons transferred, four hydrogen ions are translocated across the cytoplasmic membrane), and thus conserves the redox energy in a proton gradient. In Tolumonas auensis (strain DSM 9187 / NBRC 110442 / TA 4), this protein is NADH-quinone oxidoreductase subunit N.